The chain runs to 239 residues: MGRIGNIINRKGKQDAQRAKIFTKHARAIAVAAKEGGADPEYNAALKTAIEKAKADNMPNDNIDRAIAKGAGAGAGEDYETIVYEGYGPGGVAVIVETLTDNKNRTAGNVRYYFDKNGGNLGTSGCVSFMFDKKGQILVGLGDGVSEEELMDVALEAGAEDFITEEDGYEIITTPEDFSSVRDELKAKGYEFISADVKMIPQTTTVLTEESHLKMMNKLVDMLEEDDDVQDIYHNWEVE.

It belongs to the TACO1 family.

It is found in the cytoplasm. This Clostridioides difficile (strain 630) (Peptoclostridium difficile) protein is Probable transcriptional regulatory protein CD630_07950.